We begin with the raw amino-acid sequence, 213 residues long: Thiamine-phosphate synthase (213 aa).

4-amino-2-methyl-5-(diphosphooxymethyl)pyrimidine contacts are provided by residues 43 to 47 (QLRDK) and asparagine 74. Mg(2+) contacts are provided by aspartate 75 and aspartate 94. Serine 113 is a 4-amino-2-methyl-5-(diphosphooxymethyl)pyrimidine binding site. 142-144 (TAT) is a 2-[(2R,5Z)-2-carboxy-4-methylthiazol-5(2H)-ylidene]ethyl phosphate binding site. Lysine 145 is a 4-amino-2-methyl-5-(diphosphooxymethyl)pyrimidine binding site. Residues glycine 173 and 193–194 (VS) each bind 2-[(2R,5Z)-2-carboxy-4-methylthiazol-5(2H)-ylidene]ethyl phosphate.

The protein belongs to the thiamine-phosphate synthase family. It depends on Mg(2+) as a cofactor.

It carries out the reaction 2-[(2R,5Z)-2-carboxy-4-methylthiazol-5(2H)-ylidene]ethyl phosphate + 4-amino-2-methyl-5-(diphosphooxymethyl)pyrimidine + 2 H(+) = thiamine phosphate + CO2 + diphosphate. The enzyme catalyses 2-(2-carboxy-4-methylthiazol-5-yl)ethyl phosphate + 4-amino-2-methyl-5-(diphosphooxymethyl)pyrimidine + 2 H(+) = thiamine phosphate + CO2 + diphosphate. It catalyses the reaction 4-methyl-5-(2-phosphooxyethyl)-thiazole + 4-amino-2-methyl-5-(diphosphooxymethyl)pyrimidine + H(+) = thiamine phosphate + diphosphate. It functions in the pathway cofactor biosynthesis; thiamine diphosphate biosynthesis; thiamine phosphate from 4-amino-2-methyl-5-diphosphomethylpyrimidine and 4-methyl-5-(2-phosphoethyl)-thiazole: step 1/1. In terms of biological role, condenses 4-methyl-5-(beta-hydroxyethyl)thiazole monophosphate (THZ-P) and 2-methyl-4-amino-5-hydroxymethyl pyrimidine pyrophosphate (HMP-PP) to form thiamine monophosphate (TMP). In Psychrobacter sp. (strain PRwf-1), this protein is Thiamine-phosphate synthase.